The following is a 141-amino-acid chain: Nucleoside diphosphate kinase (141 aa).

6 residues coordinate ATP: Lys11, Phe59, Arg87, Thr93, Arg104, and Asn114. The active-site Pros-phosphohistidine intermediate is His117.

It belongs to the NDK family. As to quaternary structure, homotetramer. Requires Mg(2+) as cofactor.

The protein resides in the cytoplasm. The catalysed reaction is a 2'-deoxyribonucleoside 5'-diphosphate + ATP = a 2'-deoxyribonucleoside 5'-triphosphate + ADP. The enzyme catalyses a ribonucleoside 5'-diphosphate + ATP = a ribonucleoside 5'-triphosphate + ADP. In terms of biological role, major role in the synthesis of nucleoside triphosphates other than ATP. The ATP gamma phosphate is transferred to the NDP beta phosphate via a ping-pong mechanism, using a phosphorylated active-site intermediate. The polypeptide is Nucleoside diphosphate kinase (Serratia proteamaculans (strain 568)).